The chain runs to 427 residues: Rhodocoxin reductase (427 aa).

S2–E34 serves as a coordination point for FAD. S144–E172 provides a ligand contact to NAD(+).

It belongs to the FAD-dependent oxidoreductase family. The cofactor is FAD.

Functionally, the degradation of the thiocarbamate herbicide EPTC by cytochrome CYP116 (thcB) requires the participation of a flavoprotein, rhodocoxin reductase, and an iron-sulfur protein, rhodocoxin, to mediate the transfer of electrons from NADH to P450 for oxygen activation. This Rhodococcus erythropolis (Arthrobacter picolinophilus) protein is Rhodocoxin reductase (thcD).